The chain runs to 730 residues: Tubulin polyglutamylase ttll-5 (730 aa).

In terms of domain architecture, TTL spans 120–478 (RLRLTFKMMR…PLLDRKIIDS (359 aa)). Residues 278–281 (SRYL), Lys291, and Asp293 each bind ATP. A disordered region spans residues 594–618 (KKNTKNSSGSSKASSSSASASSSSS). The span at 600 to 618 (SSGSSKASSSSASASSSSS) shows a compositional bias: low complexity.

Belongs to the tubulin--tyrosine ligase family. As to expression, expressed in body wall muscles. Not expressed in sensory neurons.

It carries out the reaction L-glutamyl-[protein] + L-glutamate + ATP = gamma-L-glutamyl-L-glutamyl-[protein] + ADP + phosphate + H(+). Functionally, polyglutamylase which preferentially modifies alpha-tubulin. Involved in the side-chain initiation step of the polyglutamylation reaction rather than in the elongation step. Together with ttll-4 and ttll-11, required for male mating. Probably by regulating microtubule stability via the glutamylation of tubulin, negatively regulates axon regrowth after injury in PLM neurons. The chain is Tubulin polyglutamylase ttll-5 from Caenorhabditis elegans.